The following is a 238-amino-acid chain: MIRLAVIRLAQGASRAQFLQKQAQIFTSAVVNAKKKADNKKKNPPAVFSNLEENAVVQETIKEIQRVEGLLVEELTRHFSLKVDIRQYEDVMVKLENGKDKPLSMIARVTLKSPLMIMINFQDNPSAIKAAKLAIQKSTLNVTPQQEGAVLYVNVPPMSKERREKMASDAKGRILNEYKKAINEIYSKSDKKSSNEFSTRPDEAKKTREALLNMKHAAEQRGGLLIEERRKQLLKQVV.

The protein belongs to the RRF family.

The protein resides in the mitochondrion. Its function is as follows. Responsible for the release of ribosomes from messenger RNA at the termination of protein biosynthesis. May increase the efficiency of translation by recycling ribosomes from one round of translation to another. This is Ribosome-recycling factor, mitochondrial from Caenorhabditis elegans.